Consider the following 207-residue polypeptide: Phosphoserine phosphatase (207 aa).

D8 acts as the Nucleophile in catalysis. Residues D8 and D10 each coordinate Mg(2+). D10 serves as the catalytic Proton donor. Residues E17, R53, 96–97, and K141 contribute to the substrate site; that span reads SG. A Mg(2+)-binding site is contributed by D164. A substrate-binding site is contributed by N167.

This sequence belongs to the HAD-like hydrolase superfamily. SerB family. The cofactor is Mg(2+).

It catalyses the reaction O-phospho-L-serine + H2O = L-serine + phosphate. The catalysed reaction is O-phospho-D-serine + H2O = D-serine + phosphate. It participates in amino-acid biosynthesis; L-serine biosynthesis; L-serine from 3-phospho-D-glycerate: step 3/3. This chain is Phosphoserine phosphatase, found in Campylobacter jejuni subsp. doylei (strain ATCC BAA-1458 / RM4099 / 269.97).